The following is a 145-amino-acid chain: 3-dehydroquinate dehydratase (145 aa).

Y23 serves as the catalytic Proton acceptor. Positions 75, 81, and 88 each coordinate substrate. The Proton donor role is filled by H101. Substrate-binding positions include 102 to 103 (LS) and R112.

This sequence belongs to the type-II 3-dehydroquinase family. Homododecamer.

The enzyme catalyses 3-dehydroquinate = 3-dehydroshikimate + H2O. Its pathway is metabolic intermediate biosynthesis; chorismate biosynthesis; chorismate from D-erythrose 4-phosphate and phosphoenolpyruvate: step 3/7. Functionally, catalyzes a trans-dehydration via an enolate intermediate. In Legionella pneumophila (strain Lens), this protein is 3-dehydroquinate dehydratase.